The following is a 491-amino-acid chain: Transmembrane protein 200A (491 aa).

The Cytoplasmic portion of the chain corresponds to 1–61 (MIATGGVITG…RGKIRLYSPS (61 aa)). Residues 16–41 (RQDSARSQQHVNLSPSPATQEKKPIR) are disordered. Residues 20–34 (ARSQQHVNLSPSPAT) show a composition bias toward polar residues. The chain crosses the membrane as a helical span at residues 62–82 (GFFLILGVLISIIGIAMAVLG). Over 83–126 (YWPQKEHFIDAETTLSTNETQVIRNEGGVVVRFFEQHLHSDKMK) the chain is Extracellular. N-linked (GlcNAc...) asparagine glycosylation is present at Asn100. The helical transmembrane segment at 127–147 (MLGPFTMGIGIFIFICANAIL) threads the bilayer. At 148–491 (HENRDKETKI…LKRGTSETRF (344 aa)) the chain is on the cytoplasmic side. Ser350 is subject to Phosphoserine.

Belongs to the TMEM200 family. Expressed in cerebellum.

The protein localises to the membrane. The polypeptide is Transmembrane protein 200A (TMEM200A) (Homo sapiens (Human)).